The sequence spans 499 residues: Probable cytosol aminopeptidase (499 aa).

Mn(2+) contacts are provided by Lys268 and Asp273. Residue Lys280 is part of the active site. Residues Asp291, Asp350, and Glu352 each contribute to the Mn(2+) site. Arg354 is a catalytic residue.

The protein belongs to the peptidase M17 family. Mn(2+) is required as a cofactor.

Its subcellular location is the cytoplasm. It carries out the reaction Release of an N-terminal amino acid, Xaa-|-Yaa-, in which Xaa is preferably Leu, but may be other amino acids including Pro although not Arg or Lys, and Yaa may be Pro. Amino acid amides and methyl esters are also readily hydrolyzed, but rates on arylamides are exceedingly low.. It catalyses the reaction Release of an N-terminal amino acid, preferentially leucine, but not glutamic or aspartic acids.. Presumably involved in the processing and regular turnover of intracellular proteins. Catalyzes the removal of unsubstituted N-terminal amino acids from various peptides. This is Probable cytosol aminopeptidase from Halorhodospira halophila (strain DSM 244 / SL1) (Ectothiorhodospira halophila (strain DSM 244 / SL1)).